We begin with the raw amino-acid sequence, 1030 residues long: Putative pentatricopeptide repeat-containing protein At5g06400, mitochondrial (1030 aa).

The transit peptide at 1 to 77 (MKALFRFKSC…VKLDETTRLR (77 aa)) directs the protein to the mitochondrion. 19 PPR repeats span residues 188–222 (RVGI…GCDK), 223–257 (DIRT…GFEL), 258–292 (DATA…GITF), 293–323 (GLRT…MVRI), 328–362 (EHDA…EMCL), 363–393 (DAKY…MKRR), 397–431 (DSNV…GRPP), 432–466 (RVST…GIEP), 467–501 (DSVA…GIKP), 502–536 (TWKS…KIVI), 677–711 (NSEA…GCLI), 712–746 (TQDT…GLIP), 747–783 (SSST…GFVP), 784–814 (DREL…LGKI), 818–852 (VTVA…RSLL), 853–887 (DQYT…GTKP), 888–922 (GVHV…SCEP), 923–957 (SVVT…GTSP), and 958–992 (DFKT…GIAP).

The protein belongs to the PPR family. P subfamily.

The protein resides in the mitochondrion. This is Putative pentatricopeptide repeat-containing protein At5g06400, mitochondrial from Arabidopsis thaliana (Mouse-ear cress).